The primary structure comprises 89 residues: Small cysteine-rich protein 1 (89 aa).

Residues 1-20 form the signal peptide; sequence MDVRFRLCLFLVILVIVANA. Residues 21 to 27 constitute a propeptide that is removed on maturation; the sequence is NVIKEPE.

Belongs to the Cnidaria small cysteine-rich protein (SCRiP) family. gamma subfamily. Contains 4 disulfide bonds.

It is found in the secreted. Its subcellular location is the nematocyst. Induces neurotoxic symptoms on zebrafish. Has also been claimed to be implied in calcification, but tests on homolog proteins suggest that proteins of this family have a neurotoxic function and not a calcification function. The polypeptide is Small cysteine-rich protein 1 (Acropora millepora (Staghorn coral)).